Here is a 521-residue protein sequence, read N- to C-terminus: GMP synthase [glutamine-hydrolyzing] (521 aa).

The Glutamine amidotransferase type-1 domain maps to 8–203 (KILILDFGAQ…VVDICGCQTL (196 aa)). The active-site Nucleophile is C85. Residues H177 and E179 contribute to the active site. The GMPS ATP-PPase domain maps to 204–396 (WTAANIIDDQ…LGLPRTMVYR (193 aa)). An ATP-binding site is contributed by 231–237 (SGGVDSS).

In terms of assembly, homodimer.

The enzyme catalyses XMP + L-glutamine + ATP + H2O = GMP + L-glutamate + AMP + diphosphate + 2 H(+). The protein operates within purine metabolism; GMP biosynthesis; GMP from XMP (L-Gln route): step 1/1. In terms of biological role, catalyzes the synthesis of GMP from XMP. This chain is GMP synthase [glutamine-hydrolyzing], found in Xanthomonas oryzae pv. oryzae (strain PXO99A).